The following is a 525-amino-acid chain: GMP synthase [glutamine-hydrolyzing] (525 aa).

The region spanning 9–207 (RILILDFGSQ…VLQICQCEPL (199 aa)) is the Glutamine amidotransferase type-1 domain. The active-site Nucleophile is Cys86. Active-site residues include His181 and Glu183. The GMPS ATP-PPase domain maps to 208-400 (WTPRNIIDQT…LGLPNAMLHR (193 aa)). 235–241 (SGGVDSA) contacts ATP.

As to quaternary structure, homodimer.

It catalyses the reaction XMP + L-glutamine + ATP + H2O = GMP + L-glutamate + AMP + diphosphate + 2 H(+). The protein operates within purine metabolism; GMP biosynthesis; GMP from XMP (L-Gln route): step 1/1. Functionally, catalyzes the synthesis of GMP from XMP. This is GMP synthase [glutamine-hydrolyzing] from Hamiltonella defensa subsp. Acyrthosiphon pisum (strain 5AT).